The chain runs to 569 residues: Aspartokinase 1, chloroplastic (569 aa).

The N-terminal 90 residues, 1 to 90, are a transit peptide targeting the chloroplast; that stretch reads MAATRVRCCH…VDEKGITCVM (90 aa). Lys-91, Gly-94, and Ser-123 together coordinate ATP. Glu-207 serves as a coordination point for substrate. 2 consecutive ACT domains span residues 405–483 and 484–560; these read IAST…AIIS and LIGN…GNGS. The L-lysine site is built by Gln-413 and Gly-415. Ser-430 contacts S-adenosyl-L-methionine. L-lysine is bound by residues Val-431, Asp-432, and Ser-437. S-adenosyl-L-methionine contacts are provided by Ser-452 and Arg-453.

The protein belongs to the aspartokinase family. Homodimer.

Its subcellular location is the plastid. It is found in the chloroplast. It catalyses the reaction L-aspartate + ATP = 4-phospho-L-aspartate + ADP. Its pathway is amino-acid biosynthesis; L-lysine biosynthesis via DAP pathway; (S)-tetrahydrodipicolinate from L-aspartate: step 1/4. The protein operates within amino-acid biosynthesis; L-methionine biosynthesis via de novo pathway; L-homoserine from L-aspartate: step 1/3. It participates in amino-acid biosynthesis; L-threonine biosynthesis; L-threonine from L-aspartate: step 1/5. With respect to regulation, inhibited by S-adenosyl-L-methionine (SAM) and lysine in a synergistic manner. No inhibition by threonine, leucine or SAM alone, and no activation or inhibition by alanine, cysteine, isoleucine, serine, valine, methionine, glutamine, asparagine, glutamic acid or arginine. Functionally, involved in the first step of essential amino acids lysine, threonine, methionine and isoleucine synthesis via the aspartate-family pathway. This is Aspartokinase 1, chloroplastic (AK1) from Arabidopsis thaliana (Mouse-ear cress).